Here is a 418-residue protein sequence, read N- to C-terminus: Endoglucanase EG-II (418 aa).

An N-terminal signal peptide occupies residues Met1–Ala21. A Pyrrolidone carboxylic acid modification is found at Gln22. Residues Gln22–Ile57 enclose the CBM1 domain. The interval Pro58–Ser91 is linker. The disordered stretch occupies residues Ile63–Ser91. Residues Gly92–Lys418 form a catalytic region. A disulfide bridge links Cys107 with Cys113. Asn124 is a glycosylation site (N-linked (GlcNAc) asparagine). A disulfide bond links Cys183 and Cys190. Glu239 functions as the Proton donor/acceptor in the catalytic mechanism. 2 cysteine pairs are disulfide-bonded: Cys323-Cys359 and Cys364-Cys414. The active-site Nucleophile is the Glu350.

This sequence belongs to the glycosyl hydrolase 5 (cellulase A) family.

The protein resides in the secreted. It catalyses the reaction Endohydrolysis of (1-&gt;4)-beta-D-glucosidic linkages in cellulose, lichenin and cereal beta-D-glucans.. In terms of biological role, endoglucanase (EG) that cleaves the internal beta-1,4-glucosidic bonds in cellulose. The degradation of cellulose involves an interplay between different cellulolytic enzymes. Hydrolysis starts with EGs, which cut internal glycosidic linkages to reduce the polymerization degree of the substrate and creates new chain ends for exocellobiohydrolases (CBHs). The CBH release the disaccharide cellobiose from the non-reducing end of the cellulose polymer chain. Finally, beta-1,4-glucosidases hydrolyze the cellobiose and other short cello-oligosaccharides into glucose units. This chain is Endoglucanase EG-II (egl2), found in Hypocrea jecorina (Trichoderma reesei).